A 389-amino-acid polypeptide reads, in one-letter code: Major outer membrane porin (389 aa).

The N-terminal stretch at 1–23 (MKKLLKSALLSAAFAGSVGSLQA) is a signal peptide.

This sequence belongs to the chlamydial porin (CP) (TC 1.B.2) family. As to quaternary structure, part of a disulfide cross-linked outer membrane complex (COMC) composed of the major outer membrane porin (MOMP), the small cysteine-rich protein (OmcA) and the large cysteine-rich periplasmic protein (OmcB).

It is found in the cell outer membrane. Its function is as follows. In elementary bodies (EBs, the infectious stage, which is able to survive outside the host cell) provides the structural integrity of the outer envelope through disulfide cross-links with the small cysteine-rich protein and the large cysteine-rich periplasmic protein. It has been described in publications as the Sarkosyl-insoluble COMC (Chlamydia outer membrane complex), and serves as the functional equivalent of peptidoglycan. Functionally, permits diffusion of specific solutes through the outer membrane. The protein is Major outer membrane porin (ompA) of Chlamydia pneumoniae (Chlamydophila pneumoniae).